Consider the following 200-residue polypeptide: Holliday junction branch migration complex subunit RuvA (200 aa).

Residues 1–64 (MLSYLSGTLI…EDALQLYGFI (64 aa)) form a domain I region. Residues 65–143 (TTEDREVFKL…KLDLKIDIKE (79 aa)) form a domain II region. Residues 144 to 148 (TAFRS) are flexible linker. The domain III stretch occupies residues 149 to 200 (DKQQVRNDAYSALISLGFTKSIAEKAMRAAIAEVPDGSVDDLIRVALRHVQS).

The protein belongs to the RuvA family. Homotetramer. Forms an RuvA(8)-RuvB(12)-Holliday junction (HJ) complex. HJ DNA is sandwiched between 2 RuvA tetramers; dsDNA enters through RuvA and exits via RuvB. An RuvB hexamer assembles on each DNA strand where it exits the tetramer. Each RuvB hexamer is contacted by two RuvA subunits (via domain III) on 2 adjacent RuvB subunits; this complex drives branch migration. In the full resolvosome a probable DNA-RuvA(4)-RuvB(12)-RuvC(2) complex forms which resolves the HJ.

It is found in the cytoplasm. In terms of biological role, the RuvA-RuvB-RuvC complex processes Holliday junction (HJ) DNA during genetic recombination and DNA repair, while the RuvA-RuvB complex plays an important role in the rescue of blocked DNA replication forks via replication fork reversal (RFR). RuvA specifically binds to HJ cruciform DNA, conferring on it an open structure. The RuvB hexamer acts as an ATP-dependent pump, pulling dsDNA into and through the RuvAB complex. HJ branch migration allows RuvC to scan DNA until it finds its consensus sequence, where it cleaves and resolves the cruciform DNA. In Chloroherpeton thalassium (strain ATCC 35110 / GB-78), this protein is Holliday junction branch migration complex subunit RuvA.